We begin with the raw amino-acid sequence, 207 residues long: Putative 3-methyladenine DNA glycosylase (207 aa).

Belongs to the DNA glycosylase MPG family.

In Listeria welshimeri serovar 6b (strain ATCC 35897 / DSM 20650 / CCUG 15529 / CIP 8149 / NCTC 11857 / SLCC 5334 / V8), this protein is Putative 3-methyladenine DNA glycosylase.